We begin with the raw amino-acid sequence, 281 residues long: Non-selective voltage-gated ion channel 2 (281 aa).

Arg11 and Arg19 together coordinate ATP.

It belongs to the eukaryotic mitochondrial porin family.

Its subcellular location is the mitochondrion outer membrane. Non-selective voltage-gated ion channel that mediates the transport of anions and cations through the mitochondrion outer membrane. The channel adopts an open conformation at low or zero membrane potential and a closed conformation at potentials above 30-40 mV. The open state has a weak anion selectivity whereas the closed state is cation-selective. Does not confer permeability to NADH. Its function is as follows. Catalyzes the scrambling of phospholipids across the outer mitochondrial membrane; the mechanism is unrelated to channel activity and is capable of translocating both anionic and zwitterionic phospholipids. The chain is Non-selective voltage-gated ion channel 2 (POR2) from Saccharomyces cerevisiae (strain ATCC 204508 / S288c) (Baker's yeast).